The primary structure comprises 151 residues: Cell division protein SepF (151 aa).

Positions Asp17–Gln29 are enriched in acidic residues. Residues Asp17–His42 are disordered.

This sequence belongs to the SepF family. Homodimer. Interacts with FtsZ.

Its subcellular location is the cytoplasm. In terms of biological role, cell division protein that is part of the divisome complex and is recruited early to the Z-ring. Probably stimulates Z-ring formation, perhaps through the cross-linking of FtsZ protofilaments. Its function overlaps with FtsA. This chain is Cell division protein SepF, found in Lacticaseibacillus casei (strain BL23) (Lactobacillus casei).